We begin with the raw amino-acid sequence, 177 residues long: Ribosome maturation factor RimM (177 aa).

The region spanning 98–177 is the PRC barrel domain; the sequence is GEEFYWRELY…RIEVDWDPGF (80 aa).

Belongs to the RimM family. As to quaternary structure, binds ribosomal protein uS19.

The protein resides in the cytoplasm. Its function is as follows. An accessory protein needed during the final step in the assembly of 30S ribosomal subunit, possibly for assembly of the head region. Essential for efficient processing of 16S rRNA. May be needed both before and after RbfA during the maturation of 16S rRNA. It has affinity for free ribosomal 30S subunits but not for 70S ribosomes. The protein is Ribosome maturation factor RimM of Photobacterium profundum (strain SS9).